The chain runs to 168 residues: MKGRIELGDVTPHNIKQLKRLNQVIFPVSYNDKFYKDVLEVGELAKLAYFNDIAVGAVCCRVDHSQNQKRLYIMTLGCLAPYRRLGIGTKMLNHVLNICEKDGTFDNIYLHVQISNESAIDFYQKFGFEIIETKKNYYKRIEPADAHVLQKSLRSPCAPPAGELQKAD.

In terms of domain architecture, N-acetyltransferase spans 5-154; sequence IELGDVTPHN…DAHVLQKSLR (150 aa). Residue tyrosine 30 participates in substrate binding. Residue tyrosine 72 is part of the active site. Substrate is bound at residue methionine 74. 76–89 serves as a coordination point for acetyl-CoA; the sequence is LGCLAPYRRLGIGT. Residue histidine 111 is part of the active site. 116 to 125 provides a ligand contact to CoA; that stretch reads NESAIDFYQK. The substrate stretch occupies residues 137-140; the sequence is YYKR.

Belongs to the acetyltransferase family. GNAT subfamily. As to quaternary structure, interacts with naa35.

It localises to the cytoplasm. The protein localises to the nucleus. The enzyme catalyses N-terminal L-methionyl-L-alanyl-[protein] + acetyl-CoA = N-terminal N(alpha)-acetyl-L-methionyl-L-alanyl-[protein] + CoA + H(+). It carries out the reaction N-terminal L-methionyl-L-seryl-[protein] + acetyl-CoA = N-terminal N(alpha)-acetyl-L-methionyl-L-seryl-[protein] + CoA + H(+). It catalyses the reaction N-terminal L-methionyl-L-valyl-[protein] + acetyl-CoA = N-terminal N(alpha)-acetyl-L-methionyl-L-valyl-[protein] + CoA + H(+). The catalysed reaction is N-terminal L-methionyl-L-threonyl-[protein] + acetyl-CoA = N-terminal N(alpha)-acetyl-L-methionyl-L-threonyl-[protein] + CoA + H(+). The enzyme catalyses N-terminal L-methionyl-L-lysyl-[protein] + acetyl-CoA = N-terminal N(alpha)-acetyl-L-methionyl-L-lysyl-[protein] + CoA + H(+). It carries out the reaction N-terminal L-methionyl-L-leucyl-[protein] + acetyl-CoA = N-terminal N(alpha)-acetyl-L-methionyl-L-leucyl-[protein] + CoA + H(+). It catalyses the reaction N-terminal L-methionyl-L-phenylalanyl-[protein] + acetyl-CoA = N-terminal N(alpha)-acetyl-L-methionyl-L-phenylalanyl-[protein] + CoA + H(+). The catalysed reaction is N-terminal L-methionyl-L-tyrosyl-[protein] + acetyl-CoA = N-terminal N(alpha)-acetyl-L-methionyl-L-tyrosyl-[protein] + CoA + H(+). N-alpha-acetyltransferase that acetylates the N-terminus of proteins that retain their initiating methionine. Has a broad substrate specificity: able to acetylate the initiator methionine of most peptides, except for those with a proline in second position. Also displays N-epsilon-acetyltransferase activity by mediating acetylation of the side chain of specific lysines on proteins. The relevance of N-epsilon-acetyltransferase activity is however unclear. Required for sister chromatid cohesion during mitosis by promoting binding of CDCA5/sororin to cohesin. Essential in embryonic cell proliferation and survival. This Danio rerio (Zebrafish) protein is N-alpha-acetyltransferase 50 (naa50).